We begin with the raw amino-acid sequence, 112 residues long: uncharacterized protein (112 aa).

This is an uncharacterized protein from Aquifex aeolicus (strain VF5).